Consider the following 185-residue polypeptide: Ribosome-recycling factor (185 aa).

This sequence belongs to the RRF family.

It is found in the cytoplasm. Functionally, responsible for the release of ribosomes from messenger RNA at the termination of protein biosynthesis. May increase the efficiency of translation by recycling ribosomes from one round of translation to another. The protein is Ribosome-recycling factor of Helicobacter pylori (strain Shi470).